Here is a 237-residue protein sequence, read N- to C-terminus: MKKQNIPEEILSLITEEEINLFQELQIKIKELNNKTNLTRLTDGDDYWVSQVFDSIWPFKAFTNINFDNKKFLDIGSGCGFPGLAYAITHPNSEIYLIDSLKKKTDAIKILVEQINFKNNIHVINDRVENLAHQSSMRNNFNIATTRAVSNPSTVSEYILPMLKKEGFGVLYCGKWTNQESKNLDKTLEILEGKVKDKKEILLPRNKGTRNIILIQSKNFCPEIYPRKVGKPEKNPL.

S-adenosyl-L-methionine contacts are provided by residues Gly-76, Phe-81, Val-128 to Glu-129, and Arg-147.

Belongs to the methyltransferase superfamily. RNA methyltransferase RsmG family.

The protein resides in the cytoplasm. Its function is as follows. Specifically methylates the N7 position of a guanine in 16S rRNA. This chain is Ribosomal RNA small subunit methyltransferase G, found in Prochlorococcus marinus (strain AS9601).